The chain runs to 330 residues: Protein rlx (330 aa).

Residues 220–330 (LGEDYDKGGL…EKTRGFDLEL (111 aa)) are disordered. Composition is skewed to basic and acidic residues over residues 237 to 269 (NEQR…EWAR) and 279 to 330 (QNRE…DLEL).

In terms of biological role, this protein is probably required for relaxation complex formation and plasmid mobilization by conjugative plasmids. This chain is Protein rlx (rlx), found in Staphylococcus aureus.